Here is a 234-residue protein sequence, read N- to C-terminus: ATP synthase subunit delta, chloroplastic (234 aa).

A chloroplast-targeting transit peptide spans 1–47; the sequence is MASLQQTLFSLQSKLPPSSFQIARSLPLRKTFPIRINNGGNAAGARM. Ser48 bears the N-acetylserine mark. Asn66 carries N-linked (GlcNAc...) asparagine glycosylation. A Phosphothreonine modification is found at Thr234.

This sequence belongs to the ATPase delta chain family. F-type ATPases have 2 components, F(1) - the catalytic core - and F(0) - the membrane proton channel. F(1) has five subunits: alpha(3), beta(3), gamma(1), delta(1), epsilon(1). CF(0) has four main subunits: a(1), b(1), b'(1) and c(10-14). The alpha and beta chains form an alternating ring which encloses part of the gamma chain. F(1) is attached to F(0) by a central stalk formed by the gamma and epsilon chains, while a peripheral stalk is formed by the delta, b and b' chains.

It is found in the plastid. It localises to the chloroplast thylakoid membrane. In terms of biological role, f(1)F(0) ATP synthase produces ATP from ADP in the presence of a proton or sodium gradient. F-type ATPases consist of two structural domains, F(1) containing the extramembraneous catalytic core and F(0) containing the membrane proton channel, linked together by a central stalk and a peripheral stalk. During catalysis, ATP synthesis in the catalytic domain of F(1) is coupled via a rotary mechanism of the central stalk subunits to proton translocation (Potential). Essential for photosynthesis, probably by facilitating electron transport in both photosystems I and II. This protein is part of the stalk that links CF(0) to CF(1). It either transmits conformational changes from CF(0) to CF(1) or is implicated in proton conduction. In Arabidopsis thaliana (Mouse-ear cress), this protein is ATP synthase subunit delta, chloroplastic.